A 588-amino-acid polypeptide reads, in one-letter code: Secreted triacylglycerol lipase LIP1 (588 aa).

The signal sequence occupies residues 1–20 (MRFSGFVSGLGLGLLTAVSA). The Acyl-ester intermediate role is filled by Ser258. Residue Asn400 is glycosylated (N-linked (GlcNAc...) asparagine).

The protein belongs to the type-B carboxylesterase/lipase family.

The protein localises to the secreted. The enzyme catalyses a triacylglycerol + H2O = a diacylglycerol + a fatty acid + H(+). Functionally, secreted acylglycerol lipase required for efficient utilization of saturated triglyceride lipids. Is not involved in virulence. This Gibberella zeae (strain ATCC MYA-4620 / CBS 123657 / FGSC 9075 / NRRL 31084 / PH-1) (Wheat head blight fungus) protein is Secreted triacylglycerol lipase LIP1.